We begin with the raw amino-acid sequence, 154 residues long: Lipoprotein signal peptidase (154 aa).

Transmembrane regions (helical) follow at residues 8–28 (LYLI…NYIV), 58–78 (IFSG…AVVI), and 88–108 (NGLF…NFID). Active-site residues include Asp-117 and Asp-133. A helical transmembrane segment spans residues 131–151 (IADSAITVGIILVFIYLIFIS).

Belongs to the peptidase A8 family.

The protein localises to the cell membrane. The catalysed reaction is Release of signal peptides from bacterial membrane prolipoproteins. Hydrolyzes -Xaa-Yaa-Zaa-|-(S,diacylglyceryl)Cys-, in which Xaa is hydrophobic (preferably Leu), and Yaa (Ala or Ser) and Zaa (Gly or Ala) have small, neutral side chains.. It functions in the pathway protein modification; lipoprotein biosynthesis (signal peptide cleavage). This protein specifically catalyzes the removal of signal peptides from prolipoproteins. In Lactobacillus johnsonii (strain CNCM I-12250 / La1 / NCC 533), this protein is Lipoprotein signal peptidase.